Reading from the N-terminus, the 594-residue chain is Neopentalenolactone D synthase (594 aa).

FAD is bound by residues 64–65, 86–87, 94–95, 106–107, Y112, V156, and M494; these read IG, DK, TW, and DV.

The protein belongs to the FAD-binding monooxygenase family. It depends on FAD as a cofactor.

The catalysed reaction is 1-deoxy-11-oxopentalenate + NADPH + O2 + H(+) = neopentalenolactone D + NADP(+) + H2O. It functions in the pathway antibiotic biosynthesis; neopentalenolactone biosynthesis. In terms of biological role, catalyzes the flavin-dependent Baeyer-Villiger oxidation of 1-deoxy-11-oxopentalenic acid to neopentalenolactone D in the biosynthesis of neopentalenolactone antibiotic. This is Neopentalenolactone D synthase (ptlE) from Streptomyces avermitilis (strain ATCC 31267 / DSM 46492 / JCM 5070 / NBRC 14893 / NCIMB 12804 / NRRL 8165 / MA-4680).